Here is a 1308-residue protein sequence, read N- to C-terminus: Contactin-associated protein-like 4 (1308 aa).

Residues 1-25 form the signal peptide; that stretch reads MGSVTGAVLKTLLLLSTQNWNRVEA. The Extracellular portion of the chain corresponds to 26–1241; sequence GNSYDCDDPL…LANAIKSDSA (1216 aa). The region spanning 31–177 is the F5/8 type C domain; it reads CDDPLVSALP…IGMRIEVFGC (147 aa). The cysteines at positions 31 and 177 are disulfide-linked. Laminin G-like domains lie at 212–364 and 398–547; these read FKTM…SFSC and FRTW…IDSC. N-linked (GlcNAc...) asparagine glycans are attached at residues Asn-260, Asn-285, Asn-359, and Asn-538. Cystine bridges form between Cys-332-Cys-364, Cys-515-Cys-547, Cys-553-Cys-564, and Cys-558-Cys-573. One can recognise an EGF-like 1 domain in the interval 549–586; the sequence is ISDRCLPNYCEHGGECSQSWSTFHCNCTNTGYRGATCH. N-linked (GlcNAc...) asparagine glycosylation is present at Asn-574. Cys-575 and Cys-585 are oxidised to a cystine. Positions 587 to 792 constitute a Fibrinogen C-terminal domain; the sequence is NSIYEQSCEA…LLCQGDRSFW (206 aa). Residues Asn-602, Asn-625, Asn-637, Asn-706, and Asn-748 are each glycosylated (N-linked (GlcNAc...) asparagine). The region spanning 793–957 is the Laminin G-like 3 domain; that stretch reads NSASFDTEAS…AQVTPEVQPG (165 aa). 4 disulfide bridges follow: Cys-931–Cys-958, Cys-962–Cys-975, Cys-969–Cys-984, and Cys-986–Cys-996. The EGF-like 2 domain occupies 958 to 997; it reads CRGHCSSYGKLCRNGGKCRERPIGFFCDCTFSAYTGPFCS. N-linked (GlcNAc...) asparagine glycans are attached at residues Asn-1023 and Asn-1073. One can recognise a Laminin G-like 4 domain in the interval 1046–1202; that stretch reads FRTTRTPSLL…VTGHVTESSC (157 aa). Cys-1167 and Cys-1202 are joined by a disulfide. A helical transmembrane segment spans residues 1242-1262; it reads VIGGLIAVVIFILLCITAIAV. At 1263 to 1308 the chain is on the cytoplasmic side; that stretch reads RIYQQKRLYKRSEAKRSENVDSAEAVLKSELNIQNAVNENQKEYFF.

It belongs to the neurexin family. As to quaternary structure, interacts with TIAM1.

Its subcellular location is the presynaptic cell membrane. Functionally, presynaptic protein involved in both dopaminergic synaptic transmission and GABAergic system, thereby participating in the structural maturation of inhibitory interneuron synapses. Involved in the dopaminergic synaptic transmission by attenuating dopamine release through a presynaptic mechanism. Also participates in the GABAergic system. The chain is Contactin-associated protein-like 4 (CNTNAP4) from Homo sapiens (Human).